The sequence spans 241 residues: DNA protection during starvation protein 2 (241 aa).

Residues 25-65 (GAQSAGNGVPSTNVNTPAPNTGQSTAQNTNTASPLPYNRAT) are disordered. The span at 33–57 (VPSTNVNTPAPNTGQSTAQNTNTAS) shows a compositional bias: polar residues. Fe cation contacts are provided by His-100, Asp-127, and Glu-131. The span at 220–229 (TPTDPNTGFD) shows a compositional bias: polar residues. Residues 220-241 (TPTDPNTGFDINNGKPVPLRGR) form a disordered region.

Belongs to the Dps family. In terms of assembly, homododecamer. The 12 subunits form a hollow sphere into which the mineral iron core of up to 500 Fe(3+) can be deposited.

The protein localises to the cytoplasm. It carries out the reaction 2 Fe(2+) + H2O2 + 2 H(+) = 2 Fe(3+) + 2 H2O. In terms of biological role, protects DNA from oxidative damage by sequestering intracellular Fe(2+) ion and storing it in the form of Fe(3+) oxyhydroxide mineral. One hydrogen peroxide oxidizes two Fe(2+) ions, which prevents hydroxyl radical production by the Fenton reaction. This chain is DNA protection during starvation protein 2 (dps2), found in Deinococcus radiodurans (strain ATCC 13939 / DSM 20539 / JCM 16871 / CCUG 27074 / LMG 4051 / NBRC 15346 / NCIMB 9279 / VKM B-1422 / R1).